Here is a 346-residue protein sequence, read N- to C-terminus: Ketol-acid reductoisomerase (NADP(+)) (346 aa).

The 141-residue stretch at 1–141 folds into the KARI N-terminal Rossmann domain; it reads KKNSILKKNQ…GAHHAGVLES (141 aa). NADP(+) contacts are provided by residues serine 11 and 41-43; that span reads DKQ. Histidine 65 is an active-site residue. NADP(+) is bound at residue glycine 91. 2 consecutive KARI C-terminal knotted domains span residues 142 to 286 and 287 to 346; these read SFVA…PEQE and YYDH…NKVI. 4 residues coordinate Mg(2+): aspartate 150, glutamate 154, glutamate 322, and glutamate 326.

Belongs to the ketol-acid reductoisomerase family. Mg(2+) is required as a cofactor.

It catalyses the reaction (2R)-2,3-dihydroxy-3-methylbutanoate + NADP(+) = (2S)-2-acetolactate + NADPH + H(+). The enzyme catalyses (2R,3R)-2,3-dihydroxy-3-methylpentanoate + NADP(+) = (S)-2-ethyl-2-hydroxy-3-oxobutanoate + NADPH + H(+). Its pathway is amino-acid biosynthesis; L-isoleucine biosynthesis; L-isoleucine from 2-oxobutanoate: step 2/4. It participates in amino-acid biosynthesis; L-valine biosynthesis; L-valine from pyruvate: step 2/4. Functionally, involved in the biosynthesis of branched-chain amino acids (BCAA). Catalyzes an alkyl-migration followed by a ketol-acid reduction of (S)-2-acetolactate (S2AL) to yield (R)-2,3-dihydroxy-isovalerate. In the isomerase reaction, S2AL is rearranged via a Mg-dependent methyl migration to produce 3-hydroxy-3-methyl-2-ketobutyrate (HMKB). In the reductase reaction, this 2-ketoacid undergoes a metal-dependent reduction by NADPH to yield (R)-2,3-dihydroxy-isovalerate. The protein is Ketol-acid reductoisomerase (NADP(+)) (ilvC) of Buchnera aphidicola subsp. Uroleucon rurale.